Reading from the N-terminus, the 193-residue chain is Probable GTP-binding protein EngB (193 aa).

Residues 24 to 193 (NIPEIALAGR…ELKAALAELL (170 aa)) form the EngB-type G domain. Residues 32-39 (GRSNVGKS), 59-63 (GKTRT), 77-80 (DLPG), 144-147 (TKAD), and 174-176 (FSA) contribute to the GTP site. Positions 39 and 61 each coordinate Mg(2+).

Belongs to the TRAFAC class TrmE-Era-EngA-EngB-Septin-like GTPase superfamily. EngB GTPase family. It depends on Mg(2+) as a cofactor.

Necessary for normal cell division and for the maintenance of normal septation. This Syntrophomonas wolfei subsp. wolfei (strain DSM 2245B / Goettingen) protein is Probable GTP-binding protein EngB.